The sequence spans 458 residues: Phosphoglucosamine mutase (458 aa).

The active-site Phosphoserine intermediate is Ser-106. Residues Ser-106, Asp-247, Asp-249, and Asp-251 each coordinate Mg(2+). Ser-106 is subject to Phosphoserine.

This sequence belongs to the phosphohexose mutase family. Mg(2+) serves as cofactor. Activated by phosphorylation.

It catalyses the reaction alpha-D-glucosamine 1-phosphate = D-glucosamine 6-phosphate. Its function is as follows. Catalyzes the conversion of glucosamine-6-phosphate to glucosamine-1-phosphate. This Chlamydia trachomatis serovar A (strain ATCC VR-571B / DSM 19440 / HAR-13) protein is Phosphoglucosamine mutase.